Here is a 121-residue protein sequence, read N- to C-terminus: Small ribosomal subunit protein uS13 (121 aa).

The segment at 91-121 (HRRGLPVRGQNSKNNARTRKGPRRTVANKKK) is disordered. A compositionally biased stretch (basic residues) spans 106–121 (ARTRKGPRRTVANKKK).

The protein belongs to the universal ribosomal protein uS13 family. Part of the 30S ribosomal subunit. Forms a loose heterodimer with protein S19. Forms two bridges to the 50S subunit in the 70S ribosome.

Its function is as follows. Located at the top of the head of the 30S subunit, it contacts several helices of the 16S rRNA. In the 70S ribosome it contacts the 23S rRNA (bridge B1a) and protein L5 of the 50S subunit (bridge B1b), connecting the 2 subunits; these bridges are implicated in subunit movement. Contacts the tRNAs in the A and P-sites. The polypeptide is Small ribosomal subunit protein uS13 (Bacillus cereus (strain ZK / E33L)).